We begin with the raw amino-acid sequence, 420 residues long: 3-isopropylmalate dehydratase large subunit (420 aa).

[4Fe-4S] cluster-binding residues include C300, C360, and C363.

This sequence belongs to the aconitase/IPM isomerase family. LeuC type 2 subfamily. In terms of assembly, heterodimer of LeuC and LeuD. Requires [4Fe-4S] cluster as cofactor.

It catalyses the reaction (2R,3S)-3-isopropylmalate = (2S)-2-isopropylmalate. The protein operates within amino-acid biosynthesis; L-leucine biosynthesis; L-leucine from 3-methyl-2-oxobutanoate: step 2/4. In terms of biological role, catalyzes the isomerization between 2-isopropylmalate and 3-isopropylmalate, via the formation of 2-isopropylmaleate. The chain is 3-isopropylmalate dehydratase large subunit from Clostridium kluyveri (strain ATCC 8527 / DSM 555 / NBRC 12016 / NCIMB 10680 / K1).